The chain runs to 450 residues: Eukaryotic translation initiation factor 3 subunit E (450 aa).

Residues 255 to 424 (TELFFSPAYI…GTVIMNHPPQ (170 aa)) form the PCI domain.

The protein belongs to the eIF-3 subunit E family. Component of the eukaryotic translation initiation factor 3 (eIF-3) complex.

The protein resides in the cytoplasm. In terms of biological role, component of the eukaryotic translation initiation factor 3 (eIF-3) complex, which is involved in protein synthesis of a specialized repertoire of mRNAs and, together with other initiation factors, stimulates binding of mRNA and methionyl-tRNAi to the 40S ribosome. The eIF-3 complex specifically targets and initiates translation of a subset of mRNAs involved in cell proliferation. The chain is Eukaryotic translation initiation factor 3 subunit E (int6) from Aspergillus clavatus (strain ATCC 1007 / CBS 513.65 / DSM 816 / NCTC 3887 / NRRL 1 / QM 1276 / 107).